The sequence spans 339 residues: MKDALVLQSRVPAHPDSRCWFLAWNPTGTLLASCGGDRKIRIWGTEGDSWICKSVLSEGHQRTVRKVAWSPCGNYLASASFDATTCIWKKNQDDFECVTTLEGHENEVKSVAWAPSGNLLATCSRDKSVWVWEVDEEDEYECVSVLNSHTQDVKHVVWHPSQELLASASYDDTVKLYQEEGDDWVCCATLEGHESTVWSIAFDPSGQRLASCSDDRTVRIWRQYLPGNEQGVACSGSDPSWKCVCTLSGFHTRTIYDVAWCQLTGALATACGDDAIRVFEEDPGSDPQQPTFSLTAHLRQAHSQDVNCVAWNPKEAGLLASCSDDGEVAFWEYHQPAGL.

WD repeat units follow at residues 14–53, 59–98, 103–142, 148–187, 192–231, 250–289, and 301–339; these read HPDS…WICK, GHQR…FECV, GHEN…EYEC, SHTQ…WVCC, GHES…NEQG, FHTR…DPQQ, and AHSQ…PAGL. The short motif at 176-178 is the LYR motif; required for interaction with HSC20 element; that stretch reads LYQ.

Belongs to the WD repeat CIA1 family. In terms of assembly, component of the CIA complex. Interacts with CIAO2A and forms a complex with CIAO2B and MMS19; the interactions with CIAO2A and CIAO2B are mutually exclusive. Interacts with CHD1L, ERCC2, IREB2 and POLD1. Component of the MMXD complex, which includes CIAO1, ERCC2, CIAO2B, MMS19 and SLC25A5. Interacts with WT1. Interacts with CIAO3. Interacts (via LYR motif) with HSC20.

It localises to the cytoplasm. In terms of biological role, key component of the cytosolic iron-sulfur protein assembly (CIA) complex, a multiprotein complex that mediates the incorporation of iron-sulfur cluster into extramitochondrial Fe/S proteins. As a CIA complex component, interacts specifically with CIAO2A or CIAO2B and MMS19 to assist different branches of iron-sulfur protein assembly, depending of its interactors. The complex CIAO1:CIAO2B:MMS19 binds to and facilitates the assembly of most cytosolic-nuclear Fe/S proteins. CIAO1:CIAO2A specifically matures ACO1 and stabilizes IREB2. Seems to specifically modulate the transactivation activity of WT1. As part of the mitotic spindle-associated MMXD complex it may play a role in chromosome segregation. The sequence is that of Probable cytosolic iron-sulfur protein assembly protein CIAO1 from Rattus norvegicus (Rat).